Here is a 158-residue protein sequence, read N- to C-terminus: NADH-quinone oxidoreductase subunit B (158 aa).

Cys-37, Cys-38, Cys-102, and Cys-132 together coordinate [4Fe-4S] cluster.

Belongs to the complex I 20 kDa subunit family. NDH-1 is composed of 14 different subunits. Subunits NuoB, C, D, E, F, and G constitute the peripheral sector of the complex. Requires [4Fe-4S] cluster as cofactor.

The protein resides in the cell inner membrane. The enzyme catalyses a quinone + NADH + 5 H(+)(in) = a quinol + NAD(+) + 4 H(+)(out). In terms of biological role, NDH-1 shuttles electrons from NADH, via FMN and iron-sulfur (Fe-S) centers, to quinones in the respiratory chain. Couples the redox reaction to proton translocation (for every two electrons transferred, four hydrogen ions are translocated across the cytoplasmic membrane), and thus conserves the redox energy in a proton gradient. This is NADH-quinone oxidoreductase subunit B from Alkalilimnicola ehrlichii (strain ATCC BAA-1101 / DSM 17681 / MLHE-1).